We begin with the raw amino-acid sequence, 21 residues long: Protein YliM (21 aa).

The protein is Protein YliM of Escherichia coli (strain K12).